We begin with the raw amino-acid sequence, 262 residues long: Type III pantothenate kinase (262 aa).

ATP is bound at residue D12–A19. Residues Y94 and G109–V112 each bind substrate. The active-site Proton acceptor is D111. D132 lines the K(+) pocket. T135 contributes to the ATP binding site. Residue T187 participates in substrate binding.

Belongs to the type III pantothenate kinase family. In terms of assembly, homodimer. The cofactor is NH4(+). Requires K(+) as cofactor.

Its subcellular location is the cytoplasm. It carries out the reaction (R)-pantothenate + ATP = (R)-4'-phosphopantothenate + ADP + H(+). It participates in cofactor biosynthesis; coenzyme A biosynthesis; CoA from (R)-pantothenate: step 1/5. Functionally, catalyzes the phosphorylation of pantothenate (Pan), the first step in CoA biosynthesis. This chain is Type III pantothenate kinase, found in Borrelia garinii subsp. bavariensis (strain ATCC BAA-2496 / DSM 23469 / PBi) (Borreliella bavariensis).